Reading from the N-terminus, the 433-residue chain is Bifunctional urease accessory protein UreEF (433 aa).

The tract at residues 1-200 (MKIANTFIKR…VMATAASTAS (200 aa)) is urease accessory protein UreE. Positions 200–433 (SMTPSLDAGQ…ETQFSRLFRS (234 aa)) are urease accessory protein UreF.

In the N-terminal section; belongs to the UreE family. It in the C-terminal section; belongs to the UreF family. UreD, UreF and UreG form a complex that acts as a GTP-hydrolysis-dependent molecular chaperone, activating the urease apoprotein by helping to assemble the nickel containing metallocenter of UreC. The UreE protein probably delivers the nickel.

The protein resides in the cytoplasm. Involved in urease metallocenter assembly. Binds nickel. Probably functions as a nickel donor during metallocenter assembly. Functionally, required for maturation of urease via the functional incorporation of the urease nickel metallocenter. The chain is Bifunctional urease accessory protein UreEF (ureEF) from Bordetella bronchiseptica (Alcaligenes bronchisepticus).